A 348-amino-acid polypeptide reads, in one-letter code: Dihydroorotase (348 aa).

Zn(2+) is bound by residues His14 and His16. Substrate is bound by residues 16-18 (HLR) and Asn42. The Zn(2+) site is built by Lys100, His137, and His175. An N6-carboxylysine modification is found at Lys100. Residue His137 participates in substrate binding. Position 220 (Leu220) interacts with substrate. Asp248 is a binding site for Zn(2+). Residue Asp248 is part of the active site. The substrate site is built by His252 and Ala264.

The protein belongs to the metallo-dependent hydrolases superfamily. DHOase family. Class II DHOase subfamily. In terms of assembly, homodimer. Requires Zn(2+) as cofactor.

The enzyme catalyses (S)-dihydroorotate + H2O = N-carbamoyl-L-aspartate + H(+). It functions in the pathway pyrimidine metabolism; UMP biosynthesis via de novo pathway; (S)-dihydroorotate from bicarbonate: step 3/3. In terms of biological role, catalyzes the reversible cyclization of carbamoyl aspartate to dihydroorotate. The protein is Dihydroorotase of Pseudomonas aeruginosa (strain LESB58).